The primary structure comprises 197 residues: Nucleoid occlusion factor SlmA (197 aa).

The HTH tetR-type domain occupies 7–67 (INRREHILQC…GLIEFIEESL (61 aa)). Positions 30 to 49 (TTAKLASEVGVSEAALYRHF) form a DNA-binding region, H-T-H motif.

Belongs to the nucleoid occlusion factor SlmA family. In terms of assembly, homodimer. Interacts with FtsZ.

It localises to the cytoplasm. Its subcellular location is the nucleoid. Its function is as follows. Required for nucleoid occlusion (NO) phenomenon, which prevents Z-ring formation and cell division over the nucleoid. Acts as a DNA-associated cell division inhibitor that binds simultaneously chromosomal DNA and FtsZ, and disrupts the assembly of FtsZ polymers. SlmA-DNA-binding sequences (SBS) are dispersed on non-Ter regions of the chromosome, preventing FtsZ polymerization at these regions. In Shewanella oneidensis (strain ATCC 700550 / JCM 31522 / CIP 106686 / LMG 19005 / NCIMB 14063 / MR-1), this protein is Nucleoid occlusion factor SlmA.